The primary structure comprises 396 residues: uncharacterized protein (396 aa).

The [4Fe-4S] cluster site is built by Cys8, Cys14, Cys17, and Cys95. S-adenosyl-L-methionine contacts are provided by Gln229, Tyr258, Glu279, and Asp325. Residue Cys352 is the Nucleophile of the active site.

The protein belongs to the class I-like SAM-binding methyltransferase superfamily. RNA M5U methyltransferase family.

This is an uncharacterized protein from Chlamydia trachomatis serovar D (strain ATCC VR-885 / DSM 19411 / UW-3/Cx).